We begin with the raw amino-acid sequence, 366 residues long: Putative integrase/recombinase HI_1572 (366 aa).

Residues 54 to 133 form the Core-binding (CB) domain; that stretch reads ITLDELIDKY…SLSALMAKTI (80 aa). A Tyr recombinase domain is found at 168-331; sequence IFVSGYDVEH…DMAEGYKTKA (164 aa). Catalysis depends on residues R201, K226, and H308. The O-(3'-phospho-DNA)-tyrosine intermediate role is filled by Y318.

It belongs to the 'phage' integrase family.

This is Putative integrase/recombinase HI_1572 from Haemophilus influenzae (strain ATCC 51907 / DSM 11121 / KW20 / Rd).